Reading from the N-terminus, the 212-residue chain is Methylthioribulose-1-phosphate dehydratase (212 aa).

Positions 97 and 99 each coordinate Zn(2+).

The protein belongs to the aldolase class II family. MtnB subfamily. In terms of assembly, homotetramer. Requires Zn(2+) as cofactor.

The catalysed reaction is 5-(methylsulfanyl)-D-ribulose 1-phosphate = 5-methylsulfanyl-2,3-dioxopentyl phosphate + H2O. The protein operates within amino-acid biosynthesis; L-methionine biosynthesis via salvage pathway; L-methionine from S-methyl-5-thio-alpha-D-ribose 1-phosphate: step 2/6. Functionally, catalyzes the dehydration of methylthioribulose-1-phosphate (MTRu-1-P) into 2,3-diketo-5-methylthiopentyl-1-phosphate (DK-MTP-1-P). This is Methylthioribulose-1-phosphate dehydratase from Bacillus cereus (strain G9842).